Here is a 193-residue protein sequence, read N- to C-terminus: Acyl carrier protein phosphodiesterase (193 aa).

Belongs to the AcpH family.

It catalyses the reaction holo-[ACP] + H2O = apo-[ACP] + (R)-4'-phosphopantetheine + H(+). In terms of biological role, converts holo-ACP to apo-ACP by hydrolytic cleavage of the phosphopantetheine prosthetic group from ACP. This Klebsiella pneumoniae subsp. pneumoniae (strain ATCC 700721 / MGH 78578) protein is Acyl carrier protein phosphodiesterase.